Reading from the N-terminus, the 237-residue chain is MPKHGKKYLAALAKVDRTRLYSPTEALALVKETSYTKFDGTVEAHLRLGIDPRHADQNIRTTVALPHGTGKTVRVLVFAQGEAVQAALDAGADYAGSDDLIARIDRENFFDFDVAIATPDMMGKVGRIGRKLGPRGLMPNPKSGTIVPAADLARTIREVKGGRVEIRNDKTGILHVAIGKVSFTPQQLSENFVALMDAVKAAKPSGAKGTYIRSVTLTSTMGPGVPVDPVAAQNLKA.

The protein belongs to the universal ribosomal protein uL1 family. As to quaternary structure, part of the 50S ribosomal subunit.

Binds directly to 23S rRNA. The L1 stalk is quite mobile in the ribosome, and is involved in E site tRNA release. Functionally, protein L1 is also a translational repressor protein, it controls the translation of the L11 operon by binding to its mRNA. The protein is Large ribosomal subunit protein uL1 of Chloroflexus aurantiacus (strain ATCC 29364 / DSM 637 / Y-400-fl).